The sequence spans 1136 residues: Carbamoyl phosphate synthase large chain (1136 aa).

The segment at 1-402 (MPKRTDIKSV…SLGKAMRSID (402 aa)) is carboxyphosphate synthetic domain. Residues Arg-129, Arg-169, Gly-175, Gly-176, Glu-208, Ile-210, Glu-215, Gly-241, Val-242, His-243, Gln-285, and Glu-299 each coordinate ATP. Positions 133-328 (KKVVKEAGAE…IAKIATKLAL (196 aa)) constitute an ATP-grasp 1 domain. 3 residues coordinate Mg(2+): Gln-285, Glu-299, and Asn-301. Residues Gln-285, Glu-299, and Asn-301 each contribute to the Mn(2+) site. An oligomerization domain region spans residues 403–551 (KRHMGFSWDG…YYYSCYADET (149 aa)). The tract at residues 552–962 (ELRKREREAV…AFAKSQLASY (411 aa)) is carbamoyl phosphate synthetic domain. In terms of domain architecture, ATP-grasp 2 spans 681 to 881 (GEVLRQEHLN…LAKAAARIMA (201 aa)). Residues Arg-717, Lys-765, Leu-767, Glu-772, Gly-797, Val-798, His-799, Ser-800, Gln-840, and Glu-852 each coordinate ATP. Mg(2+)-binding residues include Gln-840, Glu-852, and Asn-854. Mn(2+) is bound by residues Gln-840, Glu-852, and Asn-854. The allosteric domain stretch occupies residues 963–1136 (EGGLPTNGNV…KEEGEEARAQ (174 aa)). Residues 964–1122 (GGLPTNGNVF…QEHSRELYEL (159 aa)) enclose the MGS-like domain.

This sequence belongs to the CarB family. Composed of two chains; the small (or glutamine) chain promotes the hydrolysis of glutamine to ammonia, which is used by the large (or ammonia) chain to synthesize carbamoyl phosphate. Tetramer of heterodimers (alpha,beta)4. Requires Mg(2+) as cofactor. Mn(2+) serves as cofactor.

The catalysed reaction is hydrogencarbonate + L-glutamine + 2 ATP + H2O = carbamoyl phosphate + L-glutamate + 2 ADP + phosphate + 2 H(+). It catalyses the reaction hydrogencarbonate + NH4(+) + 2 ATP = carbamoyl phosphate + 2 ADP + phosphate + 2 H(+). The protein operates within amino-acid biosynthesis; L-arginine biosynthesis; carbamoyl phosphate from bicarbonate: step 1/1. It participates in pyrimidine metabolism; UMP biosynthesis via de novo pathway; (S)-dihydroorotate from bicarbonate: step 1/3. In terms of biological role, large subunit of the glutamine-dependent carbamoyl phosphate synthetase (CPSase). CPSase catalyzes the formation of carbamoyl phosphate from the ammonia moiety of glutamine, carbonate, and phosphate donated by ATP, constituting the first step of 2 biosynthetic pathways, one leading to arginine and/or urea and the other to pyrimidine nucleotides. The large subunit (synthetase) binds the substrates ammonia (free or transferred from glutamine from the small subunit), hydrogencarbonate and ATP and carries out an ATP-coupled ligase reaction, activating hydrogencarbonate by forming carboxy phosphate which reacts with ammonia to form carbamoyl phosphate. The protein is Carbamoyl phosphate synthase large chain of Bifidobacterium animalis subsp. lactis (strain AD011).